A 326-amino-acid chain; its full sequence is Phosphate acyltransferase (326 aa).

Belongs to the PlsX family. As to quaternary structure, homodimer. Probably interacts with PlsY.

The protein localises to the cytoplasm. The enzyme catalyses a fatty acyl-[ACP] + phosphate = an acyl phosphate + holo-[ACP]. It functions in the pathway lipid metabolism; phospholipid metabolism. Its function is as follows. Catalyzes the reversible formation of acyl-phosphate (acyl-PO(4)) from acyl-[acyl-carrier-protein] (acyl-ACP). This enzyme utilizes acyl-ACP as fatty acyl donor, but not acyl-CoA. The protein is Phosphate acyltransferase of Petrotoga mobilis (strain DSM 10674 / SJ95).